We begin with the raw amino-acid sequence, 468 residues long: Glucose transport protein (468 aa).

The Cytoplasmic segment spans residues 1-17; sequence MNPSSSPSQSTANVKFV. The chain crosses the membrane as a helical span at residues 18–38; it reads LLISGVAALGGFLFGFDTAVI. Over 39–58 the chain is Extracellular; the sequence is NGAVAALQKHFQTDSLLTGL. A helical membrane pass occupies residues 59 to 78; sequence SVSLALLGSALGAFGAGPIA. Residues 79–84 are Cytoplasmic-facing; sequence DRHGRI. The chain crosses the membrane as a helical span at residues 85-105; the sequence is KTMILAAVLFTLSSIGSGLPF. The Extracellular segment spans residues 106–114; the sequence is TIWDFIFWR. The helical transmembrane segment at 115 to 135 threads the bilayer; the sequence is VLGGIGVGAASVIAPAYIAEV. The Cytoplasmic segment spans residues 136-149; that stretch reads SPAHLRGRLGSLQQ. The chain crosses the membrane as a helical span at residues 150-170; it reads LAIVSGIFIALLSNWFIALMA. At 171 to 186 the chain is on the extracellular side; that stretch reads GGSAQNPWLFGAAAWR. The helical transmembrane segment at 187–207 threads the bilayer; that stretch reads WMFWTELIPALLYGVCAFLIP. The Cytoplasmic segment spans residues 208 to 265; it reads ESPRYLVAQGQGEKAAAILWKVEGGDVPSRIEEIQATVSLDHKPRFSDLLSRRGGLLP. A helical membrane pass occupies residues 266 to 286; sequence IVWIGMGLSALQQFVGINVIF. The Extracellular portion of the chain corresponds to 287 to 307; it reads YYSSVLWRSVGFTEEKSLLIT. The chain crosses the membrane as a helical span at residues 308 to 328; the sequence is VITGFINILTTLVAIAFVDKF. The Cytoplasmic segment spans residues 329 to 331; it reads GRK. Residues 332 to 352 form a helical membrane-spanning segment; that stretch reads PLLLMGSIGMTITLGILSVVF. Residues 353 to 366 are Extracellular-facing; it reads GGATVVNGQPTLTG. The chain crosses the membrane as a helical span at residues 367-387; that stretch reads AAGIIALVTANLYVFSFGFSW. Over 388-412 the chain is Cytoplasmic; the sequence is GPIVWVLLGEMFNNKIRAAALSVAA. The helical transmembrane segment at 413–433 threads the bilayer; that stretch reads GVQWIANFIISTTFPPLLDTV. The Extracellular segment spans residues 434-436; it reads GLG. Residues 437-457 traverse the membrane as a helical segment; sequence PAYGLYATSAAISIFFIWFFV. The Cytoplasmic portion of the chain corresponds to 458–468; the sequence is KETKGKTLEQM.

This sequence belongs to the major facilitator superfamily. Sugar transporter (TC 2.A.1.1) family.

The protein resides in the cell membrane. The chain is Glucose transport protein (gtr) from Synechocystis sp. (strain ATCC 27184 / PCC 6803 / Kazusa).